The chain runs to 230 residues: uncharacterized protein (230 aa).

A helical membrane pass occupies residues 19–39; sequence GIFQVLLQLVLAMMTVWDFAG. Residue asparagine 41 is glycosylated (N-linked (GlcNAc...) asparagine; by host). Residues 55 to 75 traverse the membrane as a helical segment; the sequence is SFLLVLYTGLKQILEYMFSIC. N-linked (GlcNAc...) asparagine; by host glycans are attached at residues asparagine 86, asparagine 157, asparagine 168, and asparagine 182. A coiled-coil region spans residues 172 to 196; that stretch reads TNLHKYQNDENDTEEDSEDIEKNSD. A disordered region spans residues 178–205; it reads QNDENDTEEDSEDIEKNSDPKENSDIDS. Over residues 180–190 the composition is skewed to acidic residues; that stretch reads DENDTEEDSED. Positions 191–201 are enriched in basic and acidic residues; the sequence is IEKNSDPKENS.

The protein localises to the membrane. This is an uncharacterized protein from Acanthamoeba polyphaga mimivirus (APMV).